Reading from the N-terminus, the 190-residue chain is NADH-dependent phenylglyoxylate dehydrogenase subunit gamma (190 aa).

In terms of assembly, dimer of heteropentamers composed of an alpha (PadG), a beta (PadI), a gamma (PadE), a delta (PadF) and an epsilon (PadH) subunit.

It catalyses the reaction phenylglyoxylate + NAD(+) + CoA = benzoyl-CoA + CO2 + NADH. Its activity is regulated as follows. Activated by magnesium ions and thiamine diphosphate. In terms of biological role, involved in the anaerobic metabolism of phenylalanine and phenylacetate. Catalyzes the oxidative decarboxylation of phenylglyoxylate to benzoyl-CoA and CO(2). It can also react slowly with 2-oxo-3-methylbutanoate and use different electron acceptors such as benzyl viologen, methyl viologen, FAD or FMN, but NAD seems to be the physiological electron acceptor. Also catalyzes an isotope exchange between CO(2) and the carboxyl group which proves partial or complete reversibility of the oxidative decarboxylation reaction. This is NADH-dependent phenylglyoxylate dehydrogenase subunit gamma (padE) from Aromatoleum evansii (Azoarcus evansii).